Reading from the N-terminus, the 574-residue chain is Laccase-12 (574 aa).

The N-terminal stretch at 1–27 (MAAASSVLRCCLLVAALMTLSAMGAEA) is a signal peptide. 2 Plastocyanin-like domains span residues 35–151 (DVQT…PPAG) and 161–314 (EEVP…YDDP). An N-linked (GlcNAc...) asparagine glycan is attached at asparagine 81. Cu cation contacts are provided by histidine 85, histidine 87, histidine 130, and histidine 132. N-linked (GlcNAc...) asparagine glycosylation is found at asparagine 173, asparagine 190, asparagine 206, asparagine 242, asparagine 302, asparagine 335, asparagine 342, asparagine 381, asparagine 388, asparagine 398, asparagine 434, asparagine 441, and asparagine 447. The Plastocyanin-like 3 domain maps to 424–558 (NFPYYPLNPF…KMAWLVLDGS (135 aa)). Cu cation is bound by residues histidine 475, histidine 478, histidine 480, histidine 537, cysteine 538, histidine 539, and histidine 543.

The protein belongs to the multicopper oxidase family. Cu cation serves as cofactor.

Its subcellular location is the secreted. The protein resides in the extracellular space. It localises to the apoplast. The catalysed reaction is 4 hydroquinone + O2 = 4 benzosemiquinone + 2 H2O. Functionally, lignin degradation and detoxification of lignin-derived products. In Oryza sativa subsp. japonica (Rice), this protein is Laccase-12 (LAC12).